The following is a 178-amino-acid chain: Large ribosomal subunit protein uL6 (178 aa).

It belongs to the universal ribosomal protein uL6 family. As to quaternary structure, part of the 50S ribosomal subunit.

Functionally, this protein binds to the 23S rRNA, and is important in its secondary structure. It is located near the subunit interface in the base of the L7/L12 stalk, and near the tRNA binding site of the peptidyltransferase center. The sequence is that of Large ribosomal subunit protein uL6 from Symbiobacterium thermophilum (strain DSM 24528 / JCM 14929 / IAM 14863 / T).